The following is a 656-amino-acid chain: MQLRHINIRALIAEAGGDPWAIEHSLHAGRPAQIAELAEAFHAAGRYTAEANAAFEEARRRFEASWNRENGEHPINDSAEVQRVTAALGVQSLQLPKIGVDLENIAADLAEAQRAAAGRIATLESQLQRIDDQLDQALELEHDPRLAAAERSELDALITCLEQDAIDDTASALGQLQSIRAGYSDHLQQSLAMLRADGYDGAGLQGLDAPQSPVKPEEPIQIPPPGTGAPEVHRWWTSLTSEERQRLIAEHPEQIGNLNGVPVSARSDANIAVMTRDLNRVRDIATRYRTSVDDVLGDPAKYGLSAGDITRYRNADETKKGLDHNARNDPRNPSPVYLFAYDPMAFGGKGRAAIAIGNPDTAKHTAVIVPGTSSSVKGGWLHDNHDDALNLFNQAKAADPNNPTAVIAWMGYDAPNDFTDPRIATPMLARIGGAALAEDVNGLWVTHLGVGQNVTVLGHSYGSTTVADAFALGGMHANDAVLLGCPGTDLAHSAASFHLDGGRVYVGAASTDPISMLGQLDSLSQYVNRGNLAGQLQGLAVGLGTDPAGDGFGSVRFRAEVPNSDGINPHDHSYYYHRGSEALRSMADIASGHGDALASDGMLAQPRHQPGVEIDIPGLGSVEIDIPGTPASIDPEWSRPPGSITDDHVFDAPLHR.

Residues 623–656 (EIDIPGTPASIDPEWSRPPGSITDDHVFDAPLHR) form a disordered region. Over residues 645 to 656 (TDDHVFDAPLHR) the composition is skewed to basic and acidic residues.

This is an uncharacterized protein from Mycobacterium tuberculosis (strain ATCC 25618 / H37Rv).